Consider the following 376-residue polypeptide: Chaperone protein DnaJ (376 aa).

The 66-residue stretch at 5 to 70 (DYYEVLGVGR…DKKAAYDQFG (66 aa)) folds into the J domain. The CR-type zinc-finger motif lies at 132–210 (GLTKELKVPT…CHGNGRVEKT (79 aa)). Zn(2+) contacts are provided by Cys145, Cys148, Cys162, Cys165, Cys184, Cys187, Cys198, and Cys201. 4 CXXCXGXG motif repeats span residues 145-152 (CDSCDGSG), 162-169 (CGTCHGMG), 184-191 (CPTCHGRG), and 198-205 (CSKCHGNG).

It belongs to the DnaJ family. In terms of assembly, homodimer. The cofactor is Zn(2+).

Its subcellular location is the cytoplasm. Participates actively in the response to hyperosmotic and heat shock by preventing the aggregation of stress-denatured proteins and by disaggregating proteins, also in an autonomous, DnaK-independent fashion. Unfolded proteins bind initially to DnaJ; upon interaction with the DnaJ-bound protein, DnaK hydrolyzes its bound ATP, resulting in the formation of a stable complex. GrpE releases ADP from DnaK; ATP binding to DnaK triggers the release of the substrate protein, thus completing the reaction cycle. Several rounds of ATP-dependent interactions between DnaJ, DnaK and GrpE are required for fully efficient folding. Also involved, together with DnaK and GrpE, in the DNA replication of plasmids through activation of initiation proteins. This is Chaperone protein DnaJ from Shewanella amazonensis (strain ATCC BAA-1098 / SB2B).